We begin with the raw amino-acid sequence, 421 residues long: Odorant receptor 67b (421 aa).

Over 1–48 (MQDQLDHELERIDKLPKLGLLWVEYSAYALGVNIAPRKRSSKYCRLTR) the chain is Cytoplasmic. The chain crosses the membrane as a helical span at residues 49 to 69 (ILVLIVNLSIIYSLVAFIMEN). Residues 70–71 (YM) lie on the Extracellular side of the membrane. The chain crosses the membrane as a helical span at residues 72–92 (ISFETYVEAVLLTFQLSVGVV). At 93–151 (KMFHFQNKVESCSQLVFSTETGEVLKSLGLFQLDLPRKKELLSSVSLILLNNWMIIDRQ) the chain is on the cytoplasmic side. A helical transmembrane segment spans residues 152–172 (VMFFFKIVCMPVLYYCVRPYF). Residues 173–217 (QYIFDCYIKDKDTCEMTLTYPAIVPYLQLGNYEFPSYVIRFFLLQ) are Extracellular-facing. The chain crosses the membrane as a helical span at residues 218-238 (SGPLWCFFAVFGFNSLFVVLT). The Cytoplasmic portion of the chain corresponds to 239-289 (RYESGLIKVLRFLVQNSTSDILVPKDQRVKYLQCCVRLFARISSHHNQIEN). A helical transmembrane segment spans residues 290–310 (LFKYIILVQCSVSSILICMLL). At 311–315 (YKIST) the chain is on the extracellular side. A helical membrane pass occupies residues 316-336 (VLEVGWVWMGMIMVYFVTIAL). Over 337–384 (EITLYNVSAQKVESQSELLFHDWYNCSWYNESREFKFMIKMMLLFSRR) the chain is Cytoplasmic. The helical transmembrane segment at 385-405 (TFVLSVGGFTSLSHKFLVQVF) threads the bilayer. The Extracellular segment spans residues 406 to 421 (RLSANFFLLLRNMNNK).

It belongs to the insect chemoreceptor superfamily. Heteromeric odorant receptor channel (TC 1.A.69) family. Or63a subfamily. In terms of assembly, interacts with Orco. Complexes exist early in the endomembrane system in olfactory sensory neurons (OSNs), coupling these complexes to the conserved ciliary trafficking pathway.

Its subcellular location is the cell membrane. Functionally, odorant receptor which mediates acceptance or avoidance behavior, depending on its substrates. The odorant receptor repertoire encodes a large collection of odor stimuli that vary widely in identity, intensity, and duration. May form a complex with Orco to form odorant-sensing units, providing sensitive and prolonged odorant signaling and calcium permeability. Involved in the behavioral responses to ethyl acetate, pentyl acetate, methyl caproate, anisole, heptanal, 2-heptanone, r-carvone, nonanoic acid, and pyrazines. This Drosophila melanogaster (Fruit fly) protein is Odorant receptor 67b (Or67b).